The following is a 497-amino-acid chain: Proline--tRNA ligase (497 aa).

This sequence belongs to the class-II aminoacyl-tRNA synthetase family. ProS type 3 subfamily. As to quaternary structure, homodimer.

The protein localises to the cytoplasm. The enzyme catalyses tRNA(Pro) + L-proline + ATP = L-prolyl-tRNA(Pro) + AMP + diphosphate. Functionally, catalyzes the attachment of proline to tRNA(Pro) in a two-step reaction: proline is first activated by ATP to form Pro-AMP and then transferred to the acceptor end of tRNA(Pro). This chain is Proline--tRNA ligase, found in Deinococcus geothermalis (strain DSM 11300 / CIP 105573 / AG-3a).